Reading from the N-terminus, the 61-residue chain is Metallothionein-2 (61 aa).

M1 is modified (N-acetylmethionine). Residues 1–29 are beta; the sequence is MDPNCSCATDGSCSCAGSCKCKQCKCTSC. A divalent metal cation contacts are provided by C5, C7, C13, C15, C19, C21, C24, C26, C29, C33, C34, C36, C37, C41, C44, C48, C50, and C57. The tract at residues 30–61 is alpha; that stretch reads KKSCCSCCPVGCAKCSQGCICKEASDKCSCCA. S58 bears the Phosphoserine mark. C59 and C60 together coordinate a divalent metal cation.

Belongs to the metallothionein superfamily. Type 1 family.

In terms of biological role, metallothioneins have a high content of cysteine residues that bind various heavy metals; these proteins are transcriptionally regulated by both heavy metals and glucocorticoids. This chain is Metallothionein-2 (Mt2), found in Rattus norvegicus (Rat).